We begin with the raw amino-acid sequence, 185 residues long: Large ribosomal subunit protein bL25 (185 aa).

Belongs to the bacterial ribosomal protein bL25 family. CTC subfamily. In terms of assembly, part of the 50S ribosomal subunit; part of the 5S rRNA/L5/L18/L25 subcomplex. Contacts the 5S rRNA. Binds to the 5S rRNA independently of L5 and L18.

In terms of biological role, this is one of the proteins that binds to the 5S RNA in the ribosome where it forms part of the central protuberance. The protein is Large ribosomal subunit protein bL25 of Chlamydia muridarum (strain MoPn / Nigg).